The primary structure comprises 789 residues: 1-phosphatidylinositol 4,5-bisphosphate phosphodiesterase delta-3 (789 aa).

Residues 63–172 (RAMLRGSRLR…WVRGLTKLRA (110 aa)) form the PH domain. The substrate binding stretch occupies residues 73–101 (KIRSRTWHKERLYRLQEDGLSVWFQRRIP). Residue serine 105 is modified to Phosphoserine. EF-hand domains are found at residues 182-217 (RLDH…VNVD), 218-253 (MNDM…LLKR), and 250-285 (LLKR…QGEE). Residues aspartate 195, asparagine 197, aspartate 199, lysine 201, glutamate 206, aspartate 231, serine 233, asparagine 235, arginine 237, and glutamate 242 each coordinate Ca(2+). The 146-residue stretch at 337-482 (QDMNQPLAHY…LKGRVLVKGK (146 aa)) folds into the PI-PLC X-box domain. Residue histidine 352 is part of the active site. Ca(2+) is bound by residues asparagine 353, glutamate 382, and aspartate 384. Histidine 397 is an active-site residue. Residue glutamate 431 coordinates Ca(2+). A disordered region spans residues 461–519 (SPNPEELPSPEQLKGRVLVKGKKLPAARSEDGRALSDREEEEEDDEEEEEEVEAAAQRR). The substrate site is built by lysine 480 and lysine 482. Basic and acidic residues predominate over residues 488–497 (RSEDGRALSD). At serine 496 the chain carries Phosphoserine. Residues 498–513 (REEEEEDDEEEEEEVE) are compositionally biased toward acidic residues. A PI-PLC Y-box domain is found at 528-644 (LSALAVYCHA…GYVLKPACLR (117 aa)). Serine 557 is a substrate binding site. Residue serine 573 is modified to Phosphoserine. Residue arginine 584 participates in substrate binding. The C2 domain occupies 644 to 769 (RQPDSTFDPE…QGYRHIHLLS (126 aa)). Ca(2+) contacts are provided by isoleucine 683, aspartate 685, asparagine 709, aspartate 738, tyrosine 739, and aspartate 740.

Requires Ca(2+) as cofactor. In terms of tissue distribution, present in corneal epithelial cells (at protein level).

The protein resides in the membrane. It localises to the cytoplasm. The protein localises to the cleavage furrow. The enzyme catalyses a 1,2-diacyl-sn-glycero-3-phospho-(1D-myo-inositol-4,5-bisphosphate) + H2O = 1D-myo-inositol 1,4,5-trisphosphate + a 1,2-diacyl-sn-glycerol + H(+). Its activity is regulated as follows. Strongly activated by phosphatidic acid. Inhibited by phosphatidylethanolamine (PtdEtn), phosphatidylcholine (PtdCho), sphingomyelin and phosphatidylserine (PtdSer). Hydrolyzes the phosphatidylinositol 4,5-bisphosphate (PIP2) to generate 2 second messenger molecules diacylglycerol (DAG) and inositol 1,4,5-trisphosphate (IP3). DAG mediates the activation of protein kinase C (PKC), while IP3 releases Ca(2+) from intracellular stores. Essential for trophoblast and placental development. May participate in cytokinesis by hydrolyzing PIP2 at the cleavage furrow. Regulates neurite outgrowth through the inhibition of RhoA/Rho kinase signaling. The protein is 1-phosphatidylinositol 4,5-bisphosphate phosphodiesterase delta-3 of Homo sapiens (Human).